The following is a 393-amino-acid chain: Elongation factor Tu (393 aa).

In terms of domain architecture, tr-type G spans 6–204 (KPHINVGTIG…ALEKIELPMR (199 aa)). A G1 region spans residues 15-22 (GHVDHGKT). 15 to 22 (GHVDHGKT) contacts GTP. Threonine 22 is a binding site for Mg(2+). The G2 stretch occupies residues 58-62 (GITIS). The segment at 79-82 (DCPG) is G3. GTP-binding positions include 79–83 (DCPGH) and 134–137 (NKCD). A G4 region spans residues 134-137 (NKCD). Residues 172–174 (SAV) form a G5 region.

This sequence belongs to the TRAFAC class translation factor GTPase superfamily. Classic translation factor GTPase family. EF-Tu/EF-1A subfamily. As to quaternary structure, monomer.

Its subcellular location is the cytoplasm. The enzyme catalyses GTP + H2O = GDP + phosphate + H(+). Its function is as follows. GTP hydrolase that promotes the GTP-dependent binding of aminoacyl-tRNA to the A-site of ribosomes during protein biosynthesis. The chain is Elongation factor Tu from Anaplasma phagocytophilum (strain HZ).